The sequence spans 201 residues: Ribonuclease MRP protein subunit RMP1 (201 aa).

A helical transmembrane segment spans residues 86-108; sequence YWQFNGVIALGQFVTLGCTLVTL.

In terms of assembly, component of RNase MRP complex which consists of an RNA moiety and at least 10 protein subunits including POP1, POP3, POP4, POP5, POP6, POP7, POP8, RMP1, RPP1 and SNM1, many of which are shared with the RNase P complex.

The protein localises to the membrane. It localises to the cytoplasm. It is found in the nucleus. Functions as part of ribonuclease MRP (RNase MRP), which is involved in rRNA processing in mitochondria. The sequence is that of Ribonuclease MRP protein subunit RMP1 from Saccharomyces cerevisiae (strain ATCC 204508 / S288c) (Baker's yeast).